Consider the following 142-residue polypeptide: Thioredoxin-like protein YLS8 (142 aa).

This sequence belongs to the DIM1 family. Expressed in roots, leaves, stems, cauline leaves and flowers.

This Arabidopsis thaliana (Mouse-ear cress) protein is Thioredoxin-like protein YLS8 (YLS8).